A 506-amino-acid chain; its full sequence is Exopolysaccharide phosphotransferase NFA_48680 (506 aa).

The disordered stretch occupies residues 484–506 (PAPWERVSAPSRRPLPESTAGAA).

It belongs to the stealth family.

In Nocardia farcinica (strain IFM 10152), this protein is Exopolysaccharide phosphotransferase NFA_48680.